The sequence spans 258 residues: Ribosomal RNA small subunit methyltransferase A (258 aa).

6 residues coordinate S-adenosyl-L-methionine: His9, Leu11, Gly36, Glu57, Asp83, and Asn102.

Belongs to the class I-like SAM-binding methyltransferase superfamily. rRNA adenine N(6)-methyltransferase family. RsmA subfamily.

Its subcellular location is the cytoplasm. It carries out the reaction adenosine(1518)/adenosine(1519) in 16S rRNA + 4 S-adenosyl-L-methionine = N(6)-dimethyladenosine(1518)/N(6)-dimethyladenosine(1519) in 16S rRNA + 4 S-adenosyl-L-homocysteine + 4 H(+). Specifically dimethylates two adjacent adenosines (A1518 and A1519) in the loop of a conserved hairpin near the 3'-end of 16S rRNA in the 30S particle. May play a critical role in biogenesis of 30S subunits. This Caulobacter vibrioides (strain ATCC 19089 / CIP 103742 / CB 15) (Caulobacter crescentus) protein is Ribosomal RNA small subunit methyltransferase A.